The primary structure comprises 178 residues: ATP-dependent protease subunit HslV (178 aa).

Threonine 7 is a catalytic residue. Glycine 162, cysteine 165, and threonine 168 together coordinate Na(+).

The protein belongs to the peptidase T1B family. HslV subfamily. A double ring-shaped homohexamer of HslV is capped on each side by a ring-shaped HslU homohexamer. The assembly of the HslU/HslV complex is dependent on binding of ATP.

The protein localises to the cytoplasm. It catalyses the reaction ATP-dependent cleavage of peptide bonds with broad specificity.. With respect to regulation, allosterically activated by HslU binding. Functionally, protease subunit of a proteasome-like degradation complex believed to be a general protein degrading machinery. This is ATP-dependent protease subunit HslV from Burkholderia lata (strain ATCC 17760 / DSM 23089 / LMG 22485 / NCIMB 9086 / R18194 / 383).